A 741-amino-acid chain; its full sequence is Phosphoribosylformylglycinamidine synthase subunit PurL (741 aa).

Residue His-54 is part of the active site. Positions 57 and 98 each coordinate ATP. A Mg(2+)-binding site is contributed by Glu-100. Residues 101 to 104 (SHNH) and Arg-123 contribute to the substrate site. The active-site Proton acceptor is the His-102. Asp-124 is a Mg(2+) binding site. Gln-251 is a binding site for substrate. Asp-279 contacts Mg(2+). A substrate-binding site is contributed by 323–325 (ESQ). ATP is bound by residues Asp-510 and Gly-547. Asn-548 serves as a coordination point for Mg(2+). Ser-550 is a substrate binding site.

Belongs to the FGAMS family. In terms of assembly, monomer. Part of the FGAM synthase complex composed of 1 PurL, 1 PurQ and 2 PurS subunits.

The protein localises to the cytoplasm. It carries out the reaction N(2)-formyl-N(1)-(5-phospho-beta-D-ribosyl)glycinamide + L-glutamine + ATP + H2O = 2-formamido-N(1)-(5-O-phospho-beta-D-ribosyl)acetamidine + L-glutamate + ADP + phosphate + H(+). The protein operates within purine metabolism; IMP biosynthesis via de novo pathway; 5-amino-1-(5-phospho-D-ribosyl)imidazole from N(2)-formyl-N(1)-(5-phospho-D-ribosyl)glycinamide: step 1/2. In terms of biological role, part of the phosphoribosylformylglycinamidine synthase complex involved in the purines biosynthetic pathway. Catalyzes the ATP-dependent conversion of formylglycinamide ribonucleotide (FGAR) and glutamine to yield formylglycinamidine ribonucleotide (FGAM) and glutamate. The FGAM synthase complex is composed of three subunits. PurQ produces an ammonia molecule by converting glutamine to glutamate. PurL transfers the ammonia molecule to FGAR to form FGAM in an ATP-dependent manner. PurS interacts with PurQ and PurL and is thought to assist in the transfer of the ammonia molecule from PurQ to PurL. The chain is Phosphoribosylformylglycinamidine synthase subunit PurL from Picrophilus torridus (strain ATCC 700027 / DSM 9790 / JCM 10055 / NBRC 100828 / KAW 2/3).